We begin with the raw amino-acid sequence, 351 residues long: MGHKDFLHKLLSGDHFSQEEMTQCMNAIMNGVFPDTVIAALLALLEHKGVTSTEVAGAYYSLIAKANTIDLSPDAVDTCGTGGDHAGTYNISTIGSIIANSTGVSIAKHGNRSVTSSCGSADVLEELGFRIDLPVEATVELYARTGFSFLFAPLFHPSMKRVAHIRKELGIRTIFNMLGPLINPARSKRQLVGVYSSELMELYTEVLLQTGTRHAMIVHAMTEEGVSLDEPSLNGPTYIVEIQNGYVCRHTVYPEDFGLDRHPLSAIQGGERKQNAAIIRSILDGSASPAQIDAALYTSAMACYVSGHARCIDDGLTISRESLESGDTDRKFREILDFNAELSARYREAVN.

5-phospho-alpha-D-ribose 1-diphosphate is bound by residues glycine 80, 83 to 84 (GD), threonine 88, 90 to 93 (NIST), 108 to 116 (KHGNRSVTS), and serine 120. Glycine 80 lines the anthranilate pocket. Position 92 (serine 92) interacts with Mg(2+). Residue asparagine 111 participates in anthranilate binding. Arginine 166 is a binding site for anthranilate. Residues aspartate 229 and glutamate 230 each contribute to the Mg(2+) site.

It belongs to the anthranilate phosphoribosyltransferase family. As to quaternary structure, homodimer. Mg(2+) is required as a cofactor.

The enzyme catalyses N-(5-phospho-beta-D-ribosyl)anthranilate + diphosphate = 5-phospho-alpha-D-ribose 1-diphosphate + anthranilate. It functions in the pathway amino-acid biosynthesis; L-tryptophan biosynthesis; L-tryptophan from chorismate: step 2/5. Functionally, catalyzes the transfer of the phosphoribosyl group of 5-phosphorylribose-1-pyrophosphate (PRPP) to anthranilate to yield N-(5'-phosphoribosyl)-anthranilate (PRA). The chain is Anthranilate phosphoribosyltransferase from Chlorobium limicola (strain DSM 245 / NBRC 103803 / 6330).